We begin with the raw amino-acid sequence, 1426 residues long: Phospholipid-transporting ATPase VD (1426 aa).

At 1–97 the chain is on the cytoplasmic side; the sequence is MTEALQWARY…PRNLFEQFHR (97 aa). Residues 98-118 traverse the membrane as a helical segment; that stretch reads AANLYFLFLVVLNWVPLVEAF. At 119 to 121 the chain is on the exoplasmic loop side; it reads QKE. Residues 122–142 form a helical membrane-spanning segment; that stretch reads ITMLPLVVVLTIIAIKDGLED. Topologically, residues 143-321 are cytoplasmic; sequence YRKYKIDKQI…SKLERRANTD (179 aa). A helical membrane pass occupies residues 322–342; it reads VLWCVMLLVIMCLTGAVGHGI. Topologically, residues 343–365 are exoplasmic loop; the sequence is WLSRYEKMHFFNVPEPDGHIISP. A helical transmembrane segment spans residues 366–386; sequence LLAGFYMFWTMIILLQVLIPI. Residues 387 to 1113 lie on the Cytoplasmic side of the membrane; that stretch reads SLYVSIEIVK…HWCYTRLSNM (727 aa). The active-site 4-aspartylphosphate intermediate is D438. Residues D438, K439, and T440 each coordinate ATP. Residue D438 participates in Mg(2+) binding. T440 lines the Mg(2+) pocket. A disordered region spans residues 506–531; that stretch reads NGPLGNKPSNHLAGSSFTLGSGEGAS. Polar residues predominate over residues 512-524; it reads KPSNHLAGSSFTL. Residues E730, F772, K796, R840, T920, G921, D922, 996–1003, R1030, and K1036 each bind ATP; that span reads GLIITGKT. Mg(2+) is bound at residue D1056. The ATP site is built by N1059 and D1060. D1060 provides a ligand contact to Mg(2+). A helical membrane pass occupies residues 1114 to 1134; sequence ILYFFYKNVAYVNLLFWYQFF. Residues 1135-1145 lie on the Exoplasmic loop side of the membrane; sequence CGFSGTSMTDY. The chain crosses the membrane as a helical span at residues 1146-1166; sequence WVLIFFNLLFTSAPPVIYGVL. Topologically, residues 1167–1195 are cytoplasmic; that stretch reads EKDVSAETLMQLPELYRSGQKSEAYLPHT. The helical transmembrane segment at 1196–1216 threads the bilayer; the sequence is FWITLLDAFYQSLVCFFVPYF. At 1217-1224 the chain is on the exoplasmic loop side; the sequence is TYQGSDTD. A helical membrane pass occupies residues 1225-1245; sequence IFAFGNPLNTAALFIVLLHLV. At 1246–1252 the chain is on the cytoplasmic side; sequence IESKSLT. A helical membrane pass occupies residues 1253–1273; that stretch reads WIHLLVIIGSILSYFLFAIVF. Over 1274–1292 the chain is Exoplasmic loop; the sequence is GAMCVTCNPPSNPYWIMQE. Residues 1293 to 1313 traverse the membrane as a helical segment; sequence HMLDPVFYLVCILTTSIALLP. At 1314-1426 the chain is on the cytoplasmic side; the sequence is RFVYRVLQGS…MAGPSKGKES (113 aa). Residue 1364–1371 participates in ATP binding; that stretch reads ANQSAGKS.

This sequence belongs to the cation transport ATPase (P-type) (TC 3.A.3) family. Type IV subfamily. Component of a P4-ATPase flippase complex which consists of a catalytic alpha subunit ATP10A and an accessory beta subunit TMEM30A. Mg(2+) is required as a cofactor. In terms of processing, autophosphorylated at the conserved aspartate of the P-type ATPase signature sequence. Expressed in placenta and, to a lesser extent, in kidney.

It is found in the cell membrane. The protein localises to the endoplasmic reticulum membrane. It catalyses the reaction ATP + H2O + phospholipidSide 1 = ADP + phosphate + phospholipidSide 2.. It carries out the reaction a beta-D-glucosyl-(1&lt;-&gt;1')-N-acylsphing-4-enine(out) + ATP + H2O = a beta-D-glucosyl-(1&lt;-&gt;1')-N-acylsphing-4-enine(in) + ADP + phosphate + H(+). Functionally, catalytic component of a P4-ATPase flippase complex, which catalyzes the hydrolysis of ATP coupled to the transport of glucosylceramide (GlcCer) from the outer to the inner leaflet of the plasma membrane. The chain is Phospholipid-transporting ATPase VD from Homo sapiens (Human).